The primary structure comprises 53 residues: Dihydrolipoyl dehydrogenase (53 aa).

Residues 35–44 and Lys-53 each bind FAD; that span reads EKYPTFGGTC. Residues Cys-44 and Cys-49 are joined by a disulfide bond.

It belongs to the class-I pyridine nucleotide-disulfide oxidoreductase family. As to quaternary structure, homodimer. The cofactor is FAD.

It localises to the mitochondrion. The catalysed reaction is N(6)-[(R)-dihydrolipoyl]-L-lysyl-[protein] + NAD(+) = N(6)-[(R)-lipoyl]-L-lysyl-[protein] + NADH + H(+). Lipoamide reduction and the NADH -&gt; NAD reaction are both completely inhibited by copper and cadmium ions. Lipoamide dehydrogenase is a component of the glycine cleavage system as well as of the alpha-ketoacid dehydrogenase complexes. This enzyme has lipoamide dehydrogenase activity and NADH -&gt; NAD transhydrogenation activity. Also displays some NADH-ferricyanide reductase and NADPH -&gt; NAD transydrogenation activities. The polypeptide is Dihydrolipoyl dehydrogenase (Hymenolepis diminuta (Rat tapeworm)).